A 201-amino-acid chain; its full sequence is Holliday junction branch migration complex subunit RuvA (201 aa).

The tract at residues methionine 1–proline 63 is domain I. The segment at aspartate 64–alanine 142 is domain II. Positions alanine 143–arginine 150 are flexible linker. Positions valine 151 to arginine 201 are domain III.

Belongs to the RuvA family. As to quaternary structure, homotetramer. Forms an RuvA(8)-RuvB(12)-Holliday junction (HJ) complex. HJ DNA is sandwiched between 2 RuvA tetramers; dsDNA enters through RuvA and exits via RuvB. An RuvB hexamer assembles on each DNA strand where it exits the tetramer. Each RuvB hexamer is contacted by two RuvA subunits (via domain III) on 2 adjacent RuvB subunits; this complex drives branch migration. In the full resolvosome a probable DNA-RuvA(4)-RuvB(12)-RuvC(2) complex forms which resolves the HJ.

The protein localises to the cytoplasm. The RuvA-RuvB-RuvC complex processes Holliday junction (HJ) DNA during genetic recombination and DNA repair, while the RuvA-RuvB complex plays an important role in the rescue of blocked DNA replication forks via replication fork reversal (RFR). RuvA specifically binds to HJ cruciform DNA, conferring on it an open structure. The RuvB hexamer acts as an ATP-dependent pump, pulling dsDNA into and through the RuvAB complex. HJ branch migration allows RuvC to scan DNA until it finds its consensus sequence, where it cleaves and resolves the cruciform DNA. The sequence is that of Holliday junction branch migration complex subunit RuvA from Deinococcus radiodurans (strain ATCC 13939 / DSM 20539 / JCM 16871 / CCUG 27074 / LMG 4051 / NBRC 15346 / NCIMB 9279 / VKM B-1422 / R1).